The sequence spans 251 residues: Triosephosphate isomerase (251 aa).

9–11 (NWK) provides a ligand contact to substrate. H94 functions as the Electrophile in the catalytic mechanism. E163 functions as the Proton acceptor in the catalytic mechanism. Residues G169, S209, and 230–231 (GG) contribute to the substrate site.

Belongs to the triosephosphate isomerase family. Homodimer.

It is found in the cytoplasm. It catalyses the reaction D-glyceraldehyde 3-phosphate = dihydroxyacetone phosphate. The protein operates within carbohydrate biosynthesis; gluconeogenesis. It participates in carbohydrate degradation; glycolysis; D-glyceraldehyde 3-phosphate from glycerone phosphate: step 1/1. In terms of biological role, involved in the gluconeogenesis. Catalyzes stereospecifically the conversion of dihydroxyacetone phosphate (DHAP) to D-glyceraldehyde-3-phosphate (G3P). The sequence is that of Triosephosphate isomerase from Dehalococcoides mccartyi (strain ATCC BAA-2266 / KCTC 15142 / 195) (Dehalococcoides ethenogenes (strain 195)).